The primary structure comprises 348 residues: MKLSSFKFTLPSKLIASHPVENREDARLMVVHKRTGQIEHKTFKDLIDYLGENDTLVLNDAKIFPSKLYGSKEKTGAQIEVFLLRELESGEHLWDTLVEPARKIRVGNKLYFGDGELVAEVLDNTTSRGRTLKFLFEGTREEFYEIVDQLGFVPLPNQLKRKPETEDRERYQTVYAQHIGAVVPPFAGLHFSAHLLKRLELKGVHITPLTLHIGLNSMKIIDVEDLTKYRIGSEQFLIPDNTVTTVNTALDDKKQVCAVGTSTIKALETSVSVAGRLKPAQGWTNKLIFPPYDFKVCTSLITNFHLPESLPLVNAAAFGGYELMMEAYQIAIKEKYRFFVYGDAMLII.

The protein belongs to the QueA family. As to quaternary structure, monomer.

It is found in the cytoplasm. The enzyme catalyses 7-aminomethyl-7-carbaguanosine(34) in tRNA + S-adenosyl-L-methionine = epoxyqueuosine(34) in tRNA + adenine + L-methionine + 2 H(+). It functions in the pathway tRNA modification; tRNA-queuosine biosynthesis. Functionally, transfers and isomerizes the ribose moiety from AdoMet to the 7-aminomethyl group of 7-deazaguanine (preQ1-tRNA) to give epoxyqueuosine (oQ-tRNA). The protein is S-adenosylmethionine:tRNA ribosyltransferase-isomerase of Amoebophilus asiaticus (strain 5a2).